Here is a 297-residue protein sequence, read N- to C-terminus: Putative F-box protein At2g19630 (297 aa).

The 50-residue stretch at 11-60 (TKNSLQIPIDLIIEIFLRLSVNSIARCRCVSKQWASTLSRPYFTELFLTR) folds into the F-box domain.

This is Putative F-box protein At2g19630 from Arabidopsis thaliana (Mouse-ear cress).